Consider the following 421-residue polypeptide: Bestrophin homolog 2 (421 aa).

The next 4 helical transmembrane spans lie at 28 to 48 (IWKA…IISV), 73 to 93 (LSFI…VDRW), 239 to 259 (LMYP…SIIA), and 275 to 295 (VYFP…LKVI).

This sequence belongs to the anion channel-forming bestrophin (TC 1.A.46) family. Calcium-sensitive chloride channel subfamily. As to quaternary structure, forms oligomers.

Its subcellular location is the cell membrane. Forms chloride channels. This is Bestrophin homolog 2 (best-2) from Caenorhabditis elegans.